The chain runs to 727 residues: NADH-ubiquinone oxidoreductase 75 kDa subunit, mitochondrial (727 aa).

A mitochondrion-targeting transit peptide spans 1-23; it reads MLRIPVRKALVVLSKSPKGCVRT. Residues 30–108 enclose the 2Fe-2S ferredoxin-type domain; it reads NLIEVFVDGQ…GWNILTNSKK (79 aa). Positions 64, 75, and 78 each coordinate [2Fe-2S] cluster. Position 84 is an N6-acetyllysine (Lys-84). [2Fe-2S] cluster is bound at residue Cys-92. The 4Fe-4S His(Cys)3-ligated-type domain maps to 108–147; it reads KSKKAREGVMEFLLANHPLDCPICDQGGECDLQDQSMMFG. [4Fe-4S] cluster is bound by residues His-124, Cys-128, Cys-131, Cys-137, Cys-176, Cys-179, Cys-182, and Cys-226. The 57-residue stretch at 245 to 301 folds into the 4Fe-4S Mo/W bis-MGD-type domain; it reads TRKTESIDVMDAVGSNIVVSTRTGEVMRILPRMHEDINEEWISDKTRFAYDGLKRQR. N6-acetyllysine is present on residues Lys-467, Lys-499, and Lys-709.

Belongs to the complex I 75 kDa subunit family. As to quaternary structure, core subunit of respiratory chain NADH dehydrogenase (Complex I) which is composed of 45 different subunits. This is the largest subunit of complex I and it is a component of the iron-sulfur (IP) fragment of the enzyme. Complex I associates with ubiquinol-cytochrome reductase complex (Complex III) to form supercomplexes. Interacts with MDM2 and AKAP1. [2Fe-2S] cluster serves as cofactor. The cofactor is [4Fe-4S] cluster.

The protein localises to the mitochondrion inner membrane. It carries out the reaction a ubiquinone + NADH + 5 H(+)(in) = a ubiquinol + NAD(+) + 4 H(+)(out). Core subunit of the mitochondrial membrane respiratory chain NADH dehydrogenase (Complex I) which catalyzes electron transfer from NADH through the respiratory chain, using ubiquinone as an electron acceptor. Essential for catalysing the entry and efficient transfer of electrons within complex I. Plays a key role in the assembly and stability of complex I and participates in the association of complex I with ubiquinol-cytochrome reductase complex (Complex III) to form supercomplexes. The polypeptide is NADH-ubiquinone oxidoreductase 75 kDa subunit, mitochondrial (NDUFS1) (Pan troglodytes (Chimpanzee)).